A 1132-amino-acid chain; its full sequence is MSVKASGGSSVARPQLYQTLAVATITQAEQQDRFLGRGELDELASYFASGAKRLEIAQLLTENSEIIVSRAANRIFVGGSPMAFLEKPREPELAMAAVGGGGDVRESMKLGTVTYVETRGGFLENLRSIFNTSPSGPTPPGFRPINIARYGPSNMAKSLRDLSWFLRYATYAIVAGDPNIIVVNTRGLREIIENACSGEATIVALQEIKAASLSYFRKDPEAAEIVSQYMDVLITEFKAPTPSNKLRQRPSGDQQGLQLPQIYFSAAERRPKFVMKTGLSATEKNEVIKAAYRQIFERDITRAYSLSISDLESKVKNGDISMKEFVRRLAKSPLYQKQFYQPFINSRVIELAFRHILGRGPSSREEVQKYFSIISNGGLPALVDALVDSAEYSDYFGEETVPYLRGLGQEAQECRNWGPQQDLFNYSAPFRKVPQFITTFAAYDRPLPDQHPYGSGNDPLEIQFGAIFPKETRNPSTSPAPFGKDTRRILIHQGPGINNQVSNPSARGLAPGSLGPKVFKLDQLPGTIGKKAAKGASVKFSESSTQAVIKATYLQVFGRDVYEGQRLKVQEIKLENGEISVRDFVRALAKSDLFRKLYWTPFYVCKAIEYIHRRLLGRPTYGRQENNKYFDIASKKGLYAVVDAILDSLEYTETFGEDTVPYERYLTPAGVALRQLRVGTIREDVANVEKQETPRFVELGTVKENRTQPDIDFRINQGVTKQREQTKVFKRVAGIKDKAAIKTLISAAYRQIFERDIAPYIAQNEFSGWESKLGNGEITVKEFIEGLGYSNLYLKEFYTPYPNTKVIELGTKHFLGRAPIDQAEIRKYNQILATQGIRAFINALVNSQEYNEVFGEDTVPYRRFPTLPAANFPNTQKLYNQLTKQNNDVVIPSFKPVQARIQSDKTPILAKAIADLAAQAKQMDKSKPLFIELGRSYNDGRGQSVEVGVGTTRRKPARIYRLTNGIGQAEKQLVINAIYRQVLDVFSGQVPDYYRRTELDSKLRNGEISVREFVREIASSEIYRKRFYTPYPNTKVIEFLFRHLLGRAPATQGEIRQYNKLLADNGLRAAVEAIVDSPEYSRYFGEDVVPYPRFPSLPAGNYLGSVQAAADLVKQSWSSLSPSTLTGRPGDR.

Cys196 contacts (2R,3E)-phycocyanobilin. 4 PBS-linker domains span residues 253–433, 514–692, 709–887, and 940–1121; these read DQQG…FRKV, LGPK…EKQE, PDID…KQNN, and GRGQ…SSLS.

It belongs to the phycobilisome linker protein family. Heterodimer of ApcF (a variant beta-allophycocyanin). Phycobilisomes of this organism are composed of a two cylinder core, from which six rods radiate. The core is mainly composed of allophycocyanin alpha and beta chains and of minor components. Post-translationally, contains one covalently linked bilin chromophore. This protein autochromophorylates.

The protein resides in the cellular thylakoid membrane. Functionally, this protein is postulated to act both as terminal energy acceptor (by its phycobilin-like domains) and as a linker polypeptide (by its repeats and arms) that stabilizes the phycobilisome core architecture. Has intrinsic bilin lyase activity. The polypeptide is Phycobiliprotein ApcE (apcE) (Nostoc sp. (strain PCC 7120 / SAG 25.82 / UTEX 2576)).